The following is a 606-amino-acid chain: Calmegin (606 aa).

Positions 1–19 (MRFQGFWLCLGLLFISVNA) are cleaved as a signal peptide. Over 20–466 (EFMDDSVEME…QLMSATEQRP (447 aa)) the chain is Lumenal. Lys124 carries the post-translational modification N6-acetyllysine. Cys147 and Cys181 form a disulfide bridge. A disordered region spans residues 255–308 (PPINPPKEIEDPTDEKPDDWDERAKIPDASAVKPEDWDESEPPQIVDSSAVKPD). 8 repeat units span residues 263-276 (IEDP…DWDE), 280-293 (IPDA…DWDE), 299-312 (IVDS…GWLD), 318-331 (IPDP…DWNE), 335-348 (GEWE…PACR), 352-365 (GEWS…PKYK), 366-379 (GIWR…PNYQ), and 380-393 (GIWS…PDYF). Over residues 265-275 (DPTDEKPDDWD) the composition is skewed to acidic residues. The interval 313–346 (NEPEFIPDPNAEKPFDWNEDMDGEWEAPHISNPA) is interaction with PPIB. An intrachain disulfide couples Cys347 to Cys351. A helical membrane pass occupies residues 467–487 (WLWFIYLLTAALPIALIGSFC). Topologically, residues 488–606 (WPRKVKKKYE…SVRKRRVRKE (119 aa)) are cytoplasmic. Positions 518-544 (EVKEEKAALEKPVDLEEEKKQSDGEIV) are enriched in basic and acidic residues. A disordered region spans residues 518–606 (EVKEEKAALE…SVRKRRVRKE (89 aa)). The span at 545-567 (EKEEEGEPEEKSEEEIEIIEGQE) shows a compositional bias: acidic residues. Ser556, Ser572, Ser575, Ser577, Ser587, Ser590, and Ser597 each carry phosphoserine. Over residues 568 to 579 (EGNKSNKSGSED) the composition is skewed to basic and acidic residues. The span at 597–606 (SVRKRRVRKE) shows a compositional bias: basic residues.

Belongs to the calreticulin family. In terms of assembly, interacts with PPIB and PDILT. Interacts with ADAM2.

It is found in the endoplasmic reticulum membrane. In terms of biological role, functions during spermatogenesis as a chaperone for a range of client proteins that are important for sperm adhesion onto the egg zona pellucida and for subsequent penetration of the zona pellucida. Required for normal sperm migration from the uterus into the oviduct. Required for normal male fertility. Binds calcium ions. The polypeptide is Calmegin (CLGN) (Bos taurus (Bovine)).